A 138-amino-acid chain; its full sequence is ATP synthase epsilon chain (138 aa).

Belongs to the ATPase epsilon chain family. In terms of assembly, F-type ATPases have 2 components, CF(1) - the catalytic core - and CF(0) - the membrane proton channel. CF(1) has five subunits: alpha(3), beta(3), gamma(1), delta(1), epsilon(1). CF(0) has three main subunits: a, b and c.

It is found in the cell inner membrane. Its function is as follows. Produces ATP from ADP in the presence of a proton gradient across the membrane. The protein is ATP synthase epsilon chain of Methylibium petroleiphilum (strain ATCC BAA-1232 / LMG 22953 / PM1).